Consider the following 90-residue polypeptide: Probable Fe(2+)-trafficking protein (90 aa).

It belongs to the Fe(2+)-trafficking protein family.

Its function is as follows. Could be a mediator in iron transactions between iron acquisition and iron-requiring processes, such as synthesis and/or repair of Fe-S clusters in biosynthetic enzymes. The chain is Probable Fe(2+)-trafficking protein from Photobacterium profundum (strain SS9).